The primary structure comprises 555 residues: CCR4-NOT transcription complex subunit 6-like (555 aa).

The segment at 1–152 (MRLIGMPKEK…NLYQDPDGTR (152 aa)) is required for interaction with CNOT1, CNOT3 and CNOT7. LRR repeat units follow at residues 57–78 (HLTA…IAKL), 80–101 (NLVY…LGNM), 103–125 (SLRE…GRLF), and 126–148 (QLQT…YQDP). Positions 158–555 (MLDNLAVHPE…VNGVHLPNRR (398 aa)) are nuclease domain. Position 240 (Glu240) interacts with Mg(2+). 4 residues coordinate substrate: Glu240, Glu276, His360, and Pro365. Residue Asp410 coordinates Mg(2+). Asp410 serves as the catalytic Proton donor/acceptor. The substrate site is built by Asn412, Asn479, and Phe484.

Belongs to the CCR4/nocturin family. As to quaternary structure, component of the CCR4-NOT complex; distinct complexes seem to exist that differ in the participation of probably mutually exclusive catalytic subunits; the complex contains two deadenylase subunits, CNOT6 or CNOT6L, and CNOT7 or CNOT8. Interacts with CNOT1, CNOT3, CNOT7, CNOT8 and CNOT9. Interacts with TOB1. Interacts with NANOS2. Interacts with ZFP36. Interacts with ZFP36L2. Interacts with RBM46. It depends on Mg(2+) as a cofactor. In terms of tissue distribution, highly expressed in placenta, skeletal muscle, pancreas, testis and leukocytes. Weakly expressed in heart, spleen and thymus.

The protein localises to the cytoplasm. It is found in the nucleus. The enzyme catalyses Exonucleolytic cleavage of poly(A) to 5'-AMP.. With respect to regulation, inhibited by free AMP, and with lesser efficiency also by CMP, GMP, UMP, ATP and neomycin. Its function is as follows. Has 3'-5' poly(A) exoribonuclease activity for synthetic poly(A) RNA substrate. Catalytic component of the CCR4-NOT complex which is one of the major cellular mRNA deadenylases and is linked to various cellular processes including bulk mRNA degradation, miRNA-mediated repression, translational repression during translational initiation and general transcription regulation. Additional complex functions may be a consequence of its influence on mRNA expression. May be involved in the deadenylation-dependent degradation of mRNAs through the 3'-UTR AU-rich element-mediated mechanism. Involved in deadenylation-dependent degradation of CDKN1B mRNA. Its mRNA deadenylase activity can be inhibited by TOB1. Mediates cell proliferation and cell survival and prevents cellular senescence. The sequence is that of CCR4-NOT transcription complex subunit 6-like (CNOT6L) from Homo sapiens (Human).